Here is a 95-residue protein sequence, read N- to C-terminus: Small ribosomal subunit protein uS19 (95 aa).

Belongs to the universal ribosomal protein uS19 family.

In terms of biological role, protein S19 forms a complex with S13 that binds strongly to the 16S ribosomal RNA. In Thermodesulfovibrio yellowstonii (strain ATCC 51303 / DSM 11347 / YP87), this protein is Small ribosomal subunit protein uS19.